Here is a 464-residue protein sequence, read N- to C-terminus: Cysteine--tRNA ligase (464 aa).

Cys-32 contacts Zn(2+). The short motif at 34-44 (VTVYDDCHIGH) is the 'HIGH' region element. Positions 213, 238, and 242 each coordinate Zn(2+). Residues 270–274 (KMSKS) carry the 'KMSKS' region motif. Lys-273 provides a ligand contact to ATP.

It belongs to the class-I aminoacyl-tRNA synthetase family. In terms of assembly, monomer. Zn(2+) is required as a cofactor.

The protein localises to the cytoplasm. The enzyme catalyses tRNA(Cys) + L-cysteine + ATP = L-cysteinyl-tRNA(Cys) + AMP + diphosphate. The polypeptide is Cysteine--tRNA ligase (Francisella tularensis subsp. holarctica (strain LVS)).